A 334-amino-acid polypeptide reads, in one-letter code: Probable fructose-bisphosphate aldolase class 1 (334 aa).

The protein belongs to the class I fructose-bisphosphate aldolase family.

The enzyme catalyses beta-D-fructose 1,6-bisphosphate = D-glyceraldehyde 3-phosphate + dihydroxyacetone phosphate. Its pathway is carbohydrate degradation; glycolysis; D-glyceraldehyde 3-phosphate and glycerone phosphate from D-glucose: step 4/4. The polypeptide is Probable fructose-bisphosphate aldolase class 1 (Xanthomonas axonopodis pv. citri (strain 306)).